The primary structure comprises 324 residues: 4-hydroxy-3-methylbut-2-enyl diphosphate reductase (324 aa).

Cys-13 is a binding site for [4Fe-4S] cluster. His-41 and His-75 together coordinate (2E)-4-hydroxy-3-methylbut-2-enyl diphosphate. Dimethylallyl diphosphate contacts are provided by His-41 and His-75. Residues His-41 and His-75 each contribute to the isopentenyl diphosphate site. Cys-97 is a binding site for [4Fe-4S] cluster. Residue His-125 coordinates (2E)-4-hydroxy-3-methylbut-2-enyl diphosphate. His-125 lines the dimethylallyl diphosphate pocket. Residue His-125 participates in isopentenyl diphosphate binding. Residue Glu-127 is the Proton donor of the active site. Residue Thr-168 participates in (2E)-4-hydroxy-3-methylbut-2-enyl diphosphate binding. Cys-225 is a binding site for [4Fe-4S] cluster. The (2E)-4-hydroxy-3-methylbut-2-enyl diphosphate site is built by Ser-253, Ser-254, Asn-255, and Ser-302. Residues Ser-253, Ser-254, Asn-255, and Ser-302 each contribute to the dimethylallyl diphosphate site. Positions 253, 254, 255, and 302 each coordinate isopentenyl diphosphate.

This sequence belongs to the IspH family. [4Fe-4S] cluster is required as a cofactor.

The catalysed reaction is isopentenyl diphosphate + 2 oxidized [2Fe-2S]-[ferredoxin] + H2O = (2E)-4-hydroxy-3-methylbut-2-enyl diphosphate + 2 reduced [2Fe-2S]-[ferredoxin] + 2 H(+). It catalyses the reaction dimethylallyl diphosphate + 2 oxidized [2Fe-2S]-[ferredoxin] + H2O = (2E)-4-hydroxy-3-methylbut-2-enyl diphosphate + 2 reduced [2Fe-2S]-[ferredoxin] + 2 H(+). Its pathway is isoprenoid biosynthesis; dimethylallyl diphosphate biosynthesis; dimethylallyl diphosphate from (2E)-4-hydroxy-3-methylbutenyl diphosphate: step 1/1. The protein operates within isoprenoid biosynthesis; isopentenyl diphosphate biosynthesis via DXP pathway; isopentenyl diphosphate from 1-deoxy-D-xylulose 5-phosphate: step 6/6. Catalyzes the conversion of 1-hydroxy-2-methyl-2-(E)-butenyl 4-diphosphate (HMBPP) into a mixture of isopentenyl diphosphate (IPP) and dimethylallyl diphosphate (DMAPP). Acts in the terminal step of the DOXP/MEP pathway for isoprenoid precursor biosynthesis. The protein is 4-hydroxy-3-methylbut-2-enyl diphosphate reductase of Chlorobium limicola (strain DSM 245 / NBRC 103803 / 6330).